A 257-amino-acid polypeptide reads, in one-letter code: Trans-aconitate 2-methyltransferase (257 aa).

This sequence belongs to the methyltransferase superfamily. Tam family.

It localises to the cytoplasm. It carries out the reaction trans-aconitate + S-adenosyl-L-methionine = (E)-3-(methoxycarbonyl)pent-2-enedioate + S-adenosyl-L-homocysteine. Catalyzes the S-adenosylmethionine monomethyl esterification of trans-aconitate. The protein is Trans-aconitate 2-methyltransferase of Sinorhizobium medicae (strain WSM419) (Ensifer medicae).